The sequence spans 201 residues: Ribosome maturation factor RimM (201 aa).

Residues 92 to 166 (DEDEFYHADL…RVVVEPPANF (75 aa)) enclose the PRC barrel domain. The interval 169-201 (PAGPQPAEGEEMPDGALEALEGEEAGAGTAPQP) is disordered.

This sequence belongs to the RimM family. In terms of assembly, binds ribosomal protein uS19.

It is found in the cytoplasm. Functionally, an accessory protein needed during the final step in the assembly of 30S ribosomal subunit, possibly for assembly of the head region. Essential for efficient processing of 16S rRNA. May be needed both before and after RbfA during the maturation of 16S rRNA. It has affinity for free ribosomal 30S subunits but not for 70S ribosomes. The protein is Ribosome maturation factor RimM of Rhodospirillum centenum (strain ATCC 51521 / SW).